The chain runs to 546 residues: Probable protein kinase UbiB (546 aa).

In terms of domain architecture, Protein kinase spans 123 to 501 (DFDETPLASA…SRRQGQARYL (379 aa)). ATP-binding positions include 129 to 137 (LASASIAQV) and K152. Catalysis depends on D287, which acts as the Proton acceptor. Transmembrane regions (helical) follow at residues 498 to 517 (ARYL…FLLT) and 522 to 541 (IEWG…LGWL).

The protein belongs to the ABC1 family. UbiB subfamily.

Its subcellular location is the cell inner membrane. It functions in the pathway cofactor biosynthesis; ubiquinone biosynthesis [regulation]. Is probably a protein kinase regulator of UbiI activity which is involved in aerobic coenzyme Q (ubiquinone) biosynthesis. The sequence is that of Probable protein kinase UbiB from Aeromonas hydrophila subsp. hydrophila (strain ATCC 7966 / DSM 30187 / BCRC 13018 / CCUG 14551 / JCM 1027 / KCTC 2358 / NCIMB 9240 / NCTC 8049).